The following is a 434-amino-acid chain: Glutamyl-tRNA reductase (434 aa).

Substrate-binding positions include 52 to 55 (TCNR), S115, 120 to 122 (ETQ), and Q126. Residue C53 is the Nucleophile of the active site. 195–200 (GAGEMI) contributes to the NADP(+) binding site.

Belongs to the glutamyl-tRNA reductase family. In terms of assembly, homodimer.

The catalysed reaction is (S)-4-amino-5-oxopentanoate + tRNA(Glu) + NADP(+) = L-glutamyl-tRNA(Glu) + NADPH + H(+). It participates in porphyrin-containing compound metabolism; protoporphyrin-IX biosynthesis; 5-aminolevulinate from L-glutamyl-tRNA(Glu): step 1/2. Its function is as follows. Catalyzes the NADPH-dependent reduction of glutamyl-tRNA(Glu) to glutamate 1-semialdehyde (GSA). The sequence is that of Glutamyl-tRNA reductase from Cupriavidus necator (strain ATCC 17699 / DSM 428 / KCTC 22496 / NCIMB 10442 / H16 / Stanier 337) (Ralstonia eutropha).